The primary structure comprises 95 residues: Aspartyl/glutamyl-tRNA(Asn/Gln) amidotransferase subunit C (95 aa).

This sequence belongs to the GatC family. As to quaternary structure, heterotrimer of A, B and C subunits.

The catalysed reaction is L-glutamyl-tRNA(Gln) + L-glutamine + ATP + H2O = L-glutaminyl-tRNA(Gln) + L-glutamate + ADP + phosphate + H(+). It carries out the reaction L-aspartyl-tRNA(Asn) + L-glutamine + ATP + H2O = L-asparaginyl-tRNA(Asn) + L-glutamate + ADP + phosphate + 2 H(+). Its function is as follows. Allows the formation of correctly charged Asn-tRNA(Asn) or Gln-tRNA(Gln) through the transamidation of misacylated Asp-tRNA(Asn) or Glu-tRNA(Gln) in organisms which lack either or both of asparaginyl-tRNA or glutaminyl-tRNA synthetases. The reaction takes place in the presence of glutamine and ATP through an activated phospho-Asp-tRNA(Asn) or phospho-Glu-tRNA(Gln). This Geobacter sulfurreducens (strain ATCC 51573 / DSM 12127 / PCA) protein is Aspartyl/glutamyl-tRNA(Asn/Gln) amidotransferase subunit C.